We begin with the raw amino-acid sequence, 218 residues long: Antifreeze protein Maxi (218 aa).

Residues 1–23 form the signal peptide; that stretch reads MALSLFTVGQFIFLFWTISITEA.

This sequence belongs to the type-I AFP family. In terms of assembly, homodimer. Detected in blood serum (at protein level). Detected in liver.

The protein resides in the secreted. Its function is as follows. Contributes to protect fish blood from freezing at subzero sea water temperatures. Lowers the blood freezing point by about 1.1 degrees at a concentration of 0.1 mg/ml, and by about 1.5 degrees at a concentration of 0.2 mg/ml. Binds to nascent ice crystals and prevents further growth. In Pseudopleuronectes americanus (Winter flounder), this protein is Antifreeze protein Maxi.